The sequence spans 513 residues: Xylose import ATP-binding protein XylG (513 aa).

ABC transporter domains follow at residues 5 to 242 and 259 to 505; these read LEMK…VERE and LRIE…LRSE. 37–44 contributes to the ATP binding site; it reads GENGSGKS.

It belongs to the ABC transporter superfamily. Xylose importer (TC 3.A.1.2.4) family. In terms of assembly, the complex is composed of two ATP-binding proteins (XylG), two transmembrane proteins (XylH) and a solute-binding protein (XylF).

It localises to the cell inner membrane. It catalyses the reaction D-xylose(out) + ATP + H2O = D-xylose(in) + ADP + phosphate + H(+). Part of the ABC transporter complex XylFGH involved in xylose import. Responsible for energy coupling to the transport system. The protein is Xylose import ATP-binding protein XylG of Shigella flexneri.